A 680-amino-acid polypeptide reads, in one-letter code: Conserved oligomeric Golgi complex subunit 6 (680 aa).

The tract at residues 479 to 517 (HKSKKSGQLPRRSRTSSDSSQLTSVDALLSSSPSPPQNN) is disordered.

It belongs to the COG6 family. Component of the conserved oligomeric Golgi complex which is composed of eight different subunits and is required for normal Golgi morphology and localization. Interacts with COG5, COG7 and COG8.

The protein localises to the golgi apparatus membrane. Required for normal Golgi function. This is Conserved oligomeric Golgi complex subunit 6 from Arabidopsis thaliana (Mouse-ear cress).